Consider the following 148-residue polypeptide: Small ribosomal subunit protein bS6 (148 aa).

A disordered region spans residues 96–148 (HEEGQSAMLTRRDDRRERDGDDRPRRREGGFDRGDRGDRSPRRPRDNEAGEGA).

Belongs to the bacterial ribosomal protein bS6 family.

Its function is as follows. Binds together with bS18 to 16S ribosomal RNA. This is Small ribosomal subunit protein bS6 from Brucella suis (strain ATCC 23445 / NCTC 10510).